The primary structure comprises 616 residues: 2-[(L-alanin-3-ylcarbamoyl)methyl]-3-(2-aminoethylcarbamoyl)-2-hydroxypropanoate synthase (616 aa).

The protein belongs to the IucA/IucC family. As to quaternary structure, forms a mixture of monomer and dimer in solution.

It catalyses the reaction 2-[(2-aminoethylcarbamoyl)methyl]-2-hydroxybutanedioate + (S)-2,3-diaminopropanoate + ATP = 2-[(L-alanin-3-ylcarbamoyl)methyl]-3-(2-aminoethylcarbamoyl)-2-hydroxypropanoate + AMP + diphosphate. It functions in the pathway siderophore biosynthesis. Catalyzes the condensation of L-2,3-diaminopropionic acid (L-Dap) and citryl-diaminoethane to form L-2,3-diaminopropionyl-citryl-diaminoethane, the third step in staphyloferrin B biosynthesis. This chain is 2-[(L-alanin-3-ylcarbamoyl)methyl]-3-(2-aminoethylcarbamoyl)-2-hydroxypropanoate synthase, found in Staphylococcus aureus (strain NCTC 8325 / PS 47).